The chain runs to 236 residues: Phosphoribosylaminoimidazole-succinocarboxamide synthase (236 aa).

Belongs to the SAICAR synthetase family.

The catalysed reaction is 5-amino-1-(5-phospho-D-ribosyl)imidazole-4-carboxylate + L-aspartate + ATP = (2S)-2-[5-amino-1-(5-phospho-beta-D-ribosyl)imidazole-4-carboxamido]succinate + ADP + phosphate + 2 H(+). The protein operates within purine metabolism; IMP biosynthesis via de novo pathway; 5-amino-1-(5-phospho-D-ribosyl)imidazole-4-carboxamide from 5-amino-1-(5-phospho-D-ribosyl)imidazole-4-carboxylate: step 1/2. This chain is Phosphoribosylaminoimidazole-succinocarboxamide synthase, found in Rickettsia massiliae (strain Mtu5).